The primary structure comprises 595 residues: uncharacterized protein (595 aa).

A disordered region spans residues 112 to 180 (VRPPGYDPES…KDVFGRALPT (69 aa)). Basic and acidic residues-rich tracts occupy residues 120–133 (ESAK…EKHK) and 161–174 (RTQE…KDVF). The segment at 211–228 (VKCLRCGNFGHQSGDRDC) adopts a CCHC-type; degenerate zinc-finger fold. Disordered stretches follow at residues 254–290 (HTDP…IVAE) and 310–595 (KSMS…RRRN). The span at 256-267 (DPSEPLKWELKQ) shows a compositional bias: basic and acidic residues. Composition is skewed to basic residues over residues 316–331 (KKRK…KHSS) and 351–364 (RGSK…KKSK). Basic and acidic residues-rich tracts occupy residues 414 to 428 (HYYD…EIVD), 470 to 539 (VSEK…HVYE), and 547 to 565 (FSDR…ESNR). Over residues 584–595 (RKHRYSTNRRRN) the composition is skewed to basic residues.

This is an uncharacterized protein from Arabidopsis thaliana (Mouse-ear cress).